The primary structure comprises 185 residues: Crossover junction endodeoxyribonuclease RuvC (185 aa).

Catalysis depends on residues D7, E66, and D137. D7, E66, and D137 together coordinate Mg(2+).

This sequence belongs to the RuvC family. As to quaternary structure, homodimer which binds Holliday junction (HJ) DNA. The HJ becomes 2-fold symmetrical on binding to RuvC with unstacked arms; it has a different conformation from HJ DNA in complex with RuvA. In the full resolvosome a probable DNA-RuvA(4)-RuvB(12)-RuvC(2) complex forms which resolves the HJ. Mg(2+) is required as a cofactor.

The protein localises to the cytoplasm. It carries out the reaction Endonucleolytic cleavage at a junction such as a reciprocal single-stranded crossover between two homologous DNA duplexes (Holliday junction).. In terms of biological role, the RuvA-RuvB-RuvC complex processes Holliday junction (HJ) DNA during genetic recombination and DNA repair. Endonuclease that resolves HJ intermediates. Cleaves cruciform DNA by making single-stranded nicks across the HJ at symmetrical positions within the homologous arms, yielding a 5'-phosphate and a 3'-hydroxyl group; requires a central core of homology in the junction. The consensus cleavage sequence is 5'-(A/T)TT(C/G)-3'. Cleavage occurs on the 3'-side of the TT dinucleotide at the point of strand exchange. HJ branch migration catalyzed by RuvA-RuvB allows RuvC to scan DNA until it finds its consensus sequence, where it cleaves and resolves the cruciform DNA. The protein is Crossover junction endodeoxyribonuclease RuvC of Anaeromyxobacter dehalogenans (strain 2CP-1 / ATCC BAA-258).